The sequence spans 522 residues: Lysine--tRNA ligase (522 aa).

The short motif at 44-52 (PSGLPHIGT) is the 'HIGH' region element. A 'KMSKS' region motif is present at residues 290–294 (KISKS). K293 serves as a coordination point for ATP.

This sequence belongs to the class-I aminoacyl-tRNA synthetase family.

The protein localises to the cytoplasm. The catalysed reaction is tRNA(Lys) + L-lysine + ATP = L-lysyl-tRNA(Lys) + AMP + diphosphate. The chain is Lysine--tRNA ligase from Rickettsia bellii (strain OSU 85-389).